The sequence spans 208 residues: UPF0637 protein BCB4264_A4063 (208 aa).

The protein belongs to the UPF0637 family.

In Bacillus cereus (strain B4264), this protein is UPF0637 protein BCB4264_A4063.